A 1407-amino-acid polypeptide reads, in one-letter code: DNA-directed RNA polymerase subunit beta' (1407 aa).

Zn(2+) contacts are provided by cysteine 70, cysteine 72, cysteine 85, and cysteine 88. Aspartate 460, aspartate 462, and aspartate 464 together coordinate Mg(2+). Residues cysteine 814, cysteine 888, cysteine 895, and cysteine 898 each contribute to the Zn(2+) site. An N6-acetyllysine modification is found at lysine 972.

It belongs to the RNA polymerase beta' chain family. The RNAP catalytic core consists of 2 alpha, 1 beta, 1 beta' and 1 omega subunit. When a sigma factor is associated with the core the holoenzyme is formed, which can initiate transcription. Requires Mg(2+) as cofactor. Zn(2+) is required as a cofactor.

It carries out the reaction RNA(n) + a ribonucleoside 5'-triphosphate = RNA(n+1) + diphosphate. Functionally, DNA-dependent RNA polymerase catalyzes the transcription of DNA into RNA using the four ribonucleoside triphosphates as substrates. The polypeptide is DNA-directed RNA polymerase subunit beta' (Escherichia coli O1:K1 / APEC).